The chain runs to 766 residues: 5-methyltetrahydropteroyltriglutamate--homocysteine methyltransferase (766 aa).

5-methyltetrahydropteroyltri-L-glutamate contacts are provided by residues 16-19 (RELK) and Lys-117. L-homocysteine is bound by residues 442 to 444 (IGS) and Glu-495. L-methionine contacts are provided by residues 442–444 (IGS) and Glu-495. Residues 526-527 (RC) and Trp-572 contribute to the 5-methyltetrahydropteroyltri-L-glutamate site. Asp-610 provides a ligand contact to L-homocysteine. Asp-610 provides a ligand contact to L-methionine. Position 616 (Glu-616) interacts with 5-methyltetrahydropteroyltri-L-glutamate. Positions 652, 654, and 676 each coordinate Zn(2+). His-705 acts as the Proton donor in catalysis. Residue Cys-737 participates in Zn(2+) binding.

Belongs to the vitamin-B12 independent methionine synthase family. Zn(2+) is required as a cofactor.

It catalyses the reaction 5-methyltetrahydropteroyltri-L-glutamate + L-homocysteine = tetrahydropteroyltri-L-glutamate + L-methionine. The protein operates within amino-acid biosynthesis; L-methionine biosynthesis via de novo pathway; L-methionine from L-homocysteine (MetE route): step 1/1. Catalyzes the transfer of a methyl group from 5-methyltetrahydrofolate to homocysteine resulting in methionine formation. This Bordetella avium (strain 197N) protein is 5-methyltetrahydropteroyltriglutamate--homocysteine methyltransferase.